A 40-amino-acid polypeptide reads, in one-letter code: Photosystem II reaction center protein J (40 aa).

Residues 8-28 form a helical membrane-spanning segment; sequence IPLWVIGTVAGILVIGLIGIF.

It belongs to the PsbJ family. In terms of assembly, PSII is composed of 1 copy each of membrane proteins PsbA, PsbB, PsbC, PsbD, PsbE, PsbF, PsbH, PsbI, PsbJ, PsbK, PsbL, PsbM, PsbT, PsbX, PsbY, PsbZ, Psb30/Ycf12, at least 3 peripheral proteins of the oxygen-evolving complex and a large number of cofactors. It forms dimeric complexes.

The protein localises to the plastid. It is found in the chloroplast thylakoid membrane. Its function is as follows. One of the components of the core complex of photosystem II (PSII). PSII is a light-driven water:plastoquinone oxidoreductase that uses light energy to abstract electrons from H(2)O, generating O(2) and a proton gradient subsequently used for ATP formation. It consists of a core antenna complex that captures photons, and an electron transfer chain that converts photonic excitation into a charge separation. This chain is Photosystem II reaction center protein J, found in Lepidium virginicum (Virginia pepperweed).